The following is a 215-amino-acid chain: Adenylate kinase (215 aa).

Residue 10–15 (GTGKGT) participates in ATP binding. An NMP region spans residues 30-59 (STGDMLRESVVLKNKIGMIIKNIIEEGKLV). AMP is bound by residues Thr31, Arg36, 57-59 (KLV), 85-88 (GFPR), and Gln92. Residues 122–159 (GRRIHIQSGRIYHVKFKPPKIKDKDDLTGQTLITRKDD) are LID. Residues Arg123 and 132-133 (IY) each bind ATP. Residues Arg156 and Arg167 each coordinate AMP. Leu200 is an ATP binding site.

This sequence belongs to the adenylate kinase family. In terms of assembly, monomer.

It is found in the cytoplasm. The catalysed reaction is AMP + ATP = 2 ADP. It functions in the pathway purine metabolism; AMP biosynthesis via salvage pathway; AMP from ADP: step 1/1. In terms of biological role, catalyzes the reversible transfer of the terminal phosphate group between ATP and AMP. Plays an important role in cellular energy homeostasis and in adenine nucleotide metabolism. This Buchnera aphidicola subsp. Acyrthosiphon pisum (strain 5A) protein is Adenylate kinase.